The chain runs to 215 residues: UPF0502 protein Shew_1617 (215 aa).

Belongs to the UPF0502 family.

This chain is UPF0502 protein Shew_1617, found in Shewanella loihica (strain ATCC BAA-1088 / PV-4).